A 128-amino-acid chain; its full sequence is Flagellar assembly factor FliW 1 (128 aa).

Belongs to the FliW family. In terms of assembly, interacts with translational regulator CsrA and flagellin(s).

It is found in the cytoplasm. In terms of biological role, acts as an anti-CsrA protein, binds CsrA and prevents it from repressing translation of its target genes, one of which is flagellin. Binds to flagellin and participates in the assembly of the flagellum. In Wolinella succinogenes (strain ATCC 29543 / DSM 1740 / CCUG 13145 / JCM 31913 / LMG 7466 / NCTC 11488 / FDC 602W) (Vibrio succinogenes), this protein is Flagellar assembly factor FliW 1.